A 357-amino-acid chain; its full sequence is Ribosomal RNA large subunit methyltransferase F (357 aa).

Residues 1 to 15 are compositionally biased toward polar residues; it reads MPKPPRSTQILSCNA. The interval 1 to 33 is disordered; that stretch reads MPKPPRSTQILSCNAPNGKPKTQHPSARAKVKR.

This sequence belongs to the methyltransferase superfamily. METTL16/RlmF family.

Its subcellular location is the cytoplasm. The enzyme catalyses adenosine(1618) in 23S rRNA + S-adenosyl-L-methionine = N(6)-methyladenosine(1618) in 23S rRNA + S-adenosyl-L-homocysteine + H(+). In terms of biological role, specifically methylates the adenine in position 1618 of 23S rRNA. The sequence is that of Ribosomal RNA large subunit methyltransferase F from Shewanella putrefaciens (strain CN-32 / ATCC BAA-453).